The sequence spans 333 residues: Taste receptor type 2 member 38 (333 aa).

Residues 1–17 (MLTLTRIHTVSYEVRST) are Extracellular-facing. The chain crosses the membrane as a helical span at residues 18–38 (FLFISVLEFAVGFLTNAFVFL). Residues 39–55 (VNFWDVVKRQPLSNSDC) lie on the Cytoplasmic side of the membrane. Residues 56-76 (VLLCLSISRLFLHGLLFLSAI) form a helical membrane-spanning segment. At 77-94 (QLTHFQKLSEPLNHSYQA) the chain is on the extracellular side. The chain crosses the membrane as a helical span at residues 95 to 115 (INMLWMIANQANLWLAACLSL). At 116 to 142 (LYCSKLIRFSHTFLICLASWVSRKISQ) the chain is on the cytoplasmic side. A helical transmembrane segment spans residues 143 to 163 (MLLGIILCSCICTVLCVWCFF). The Extracellular segment spans residues 164–190 (SRPHFTVTTVLFMNNNTRLNWQIKDLN). Residue Asn178 is glycosylated (N-linked (GlcNAc...) asparagine). A helical transmembrane segment spans residues 191-211 (LFYSFLFCYLWSVPPFLLFLV). The Cytoplasmic segment spans residues 212–251 (SSGMLTVSLGRHMRTMKVYTRDSRDPSLEAHIKALKSLVS). The helical transmembrane segment at 252 to 272 (FFCFFVISSCAAFISVPLLIL) threads the bilayer. Topologically, residues 273 to 276 (WRDK) are extracellular. Residues 277-297 (IGVMVCVGIMAACPSGHAAVL) form a helical membrane-spanning segment. The Cytoplasmic segment spans residues 298–333 (ISGNAKLRRAVTTILLWAQSSLKVRADHKADSRTLC).

This sequence belongs to the G-protein coupled receptor T2R family.

The protein resides in the membrane. Functionally, receptor that may play a role in the perception of bitterness and is gustducin-linked. May play a role in sensing the chemical composition of the gastrointestinal content. The activity of this receptor may stimulate alpha gustducin, mediate PLC-beta-2 activation and lead to the gating of TRPM5. This chain is Taste receptor type 2 member 38 (TAS2R38), found in Pan paniscus (Pygmy chimpanzee).